Reading from the N-terminus, the 205-residue chain is Large ribosomal subunit protein uL10 (205 aa).

The tract at residues 167 to 205 is disordered; sequence AQGAAPAEAKAEAPASEEKAADTPAEQPAESAPEAAPEA. Low complexity-rich tracts occupy residues 169–180 and 190–205; these read GAAPAEAKAEAP and PAEQ…APEA.

This sequence belongs to the universal ribosomal protein uL10 family. As to quaternary structure, part of the ribosomal stalk of the 50S ribosomal subunit. The N-terminus interacts with L11 and the large rRNA to form the base of the stalk. The C-terminus forms an elongated spine to which L12 dimers bind in a sequential fashion forming a multimeric L10(L12)X complex.

Forms part of the ribosomal stalk, playing a central role in the interaction of the ribosome with GTP-bound translation factors. In Treponema denticola (strain ATCC 35405 / DSM 14222 / CIP 103919 / JCM 8153 / KCTC 15104), this protein is Large ribosomal subunit protein uL10.